Consider the following 113-residue polypeptide: Ig heavy chain V-III region ABE-47N (113 aa).

The Ig-like domain occupies 1-113; the sequence is EVKLEESGGG…YWGQGTLVTV (113 aa). Cys22 and Cys98 form a disulfide bridge.

In Mus musculus (Mouse), this protein is Ig heavy chain V-III region ABE-47N.